Here is a 203-residue protein sequence, read N- to C-terminus: Urease accessory protein UreG (203 aa).

14–21 (GPVGSGKT) provides a ligand contact to GTP.

This sequence belongs to the SIMIBI class G3E GTPase family. UreG subfamily. Homodimer. UreD, UreF and UreG form a complex that acts as a GTP-hydrolysis-dependent molecular chaperone, activating the urease apoprotein by helping to assemble the nickel containing metallocenter of UreC. The UreE protein probably delivers the nickel.

The protein resides in the cytoplasm. In terms of biological role, facilitates the functional incorporation of the urease nickel metallocenter. This process requires GTP hydrolysis, probably effectuated by UreG. In Rhizobium etli (strain CIAT 652), this protein is Urease accessory protein UreG.